The chain runs to 326 residues: UDP-N-acetylglucosamine transporter (326 aa).

8 helical membrane-spanning segments follow: residues 4 to 24, 38 to 58, 136 to 156, 174 to 194, 212 to 232, 243 to 263, 269 to 289, and 293 to 313; these read NLKY…VLTM, LSST…IFLV, LGMY…FVQW, FVGL…GVYF, LGFF…GELV, QLTW…AAVI, ILKG…SYFW, and FVPT…TFLY.

This sequence belongs to the nucleotide-sugar transporter family. SLC35A subfamily. Interacts with SLC35A2; the interaction is reduced in the presence of SLC35A4. Found in a complex with SLC35A2 and SLC35A4. Interacts with MGAT4B. O-Glcnacylation regulates the stability of SLC35A3 and the specific complex formation with MGAT4B.

The protein resides in the golgi apparatus membrane. It catalyses the reaction UMP(out) + UDP-N-acetyl-alpha-D-glucosamine(in) = UMP(in) + UDP-N-acetyl-alpha-D-glucosamine(out). Transports diphosphate-N-acetylglucosamine (UDP-GlcNAc) from the cytosol into the lumen of the Golgi apparatus, functioning as an antiporter that exchanges UDP-N-acetyl-alpha-D-glucosamine for UMP. May supply UDP-GlcNAc as substrate for Golgi-resident glycosyltransferases that generate highly branched, multiantennary complex N-glycans and keratan sulfate. However, the exact role of SLC35A3 still needs to be elucidated, it could be a member of a catalytically more efficient multiprotein complex rather than function independently as a single transporter. The polypeptide is UDP-N-acetylglucosamine transporter (Slc35a3) (Rattus norvegicus (Rat)).